The chain runs to 215 residues: MKTVLLTGFDPFGGESINPAWEVAKSLHEKTIREYKIISKQVPTVFHKSIQVLKEYIDELNPEIIICIGQAGGRPDITIERVAINIDDARIADNEGNQPVDVPVVEEGSAAYWSTLPMKAIVKRLQAEGIPASVSQTAGTFVCNHLFYGLMHELEKQDQKIKGGFVHIPFLPEQASKYPGQSSMSLSTIRKGIELAVEVTTTVEVDIVEVGGTTH.

Catalysis depends on residues E80, C143, and H167.

This sequence belongs to the peptidase C15 family. In terms of assembly, homotetramer.

The protein resides in the cytoplasm. It catalyses the reaction Release of an N-terminal pyroglutamyl group from a polypeptide, the second amino acid generally not being Pro.. Removes 5-oxoproline from various penultimate amino acid residues except L-proline. The sequence is that of Pyrrolidone-carboxylate peptidase from Bacillus cereus (strain ZK / E33L).